Consider the following 356-residue polypeptide: Mitogen-activated protein kinase PMK1 (356 aa).

Residues 24 to 312 (YDIQDVVGEG…VEEALKHPYL (289 aa)) enclose the Protein kinase domain. ATP-binding positions include 30–38 (VGEGAYGVV) and Lys53.

This sequence belongs to the protein kinase superfamily. CMGC Ser/Thr protein kinase family. MAP kinase subfamily. Requires Mg(2+) as cofactor. Post-translationally, phosphorylated by MST7.

It carries out the reaction L-seryl-[protein] + ATP = O-phospho-L-seryl-[protein] + ADP + H(+). The enzyme catalyses L-threonyl-[protein] + ATP = O-phospho-L-threonyl-[protein] + ADP + H(+). Its function is as follows. Mitogen-activated protein kinase; part of the MST11-MST7-PMK1 MAP kinase (MAPK) cascade that is essential for appressorium formation, penetration and invasive growth. Central regulator of appressorium development that acts downstream of the cAMP signal. The MST11-MST7-PMK1 MAP kinase cascade transduces signals from the cell surface sensors MDB2 and SHO1 that recognize various surface signals such as surface hydrophobicity, cutin monomers, and rice leaf waxes. Regulates expression of secreted fungal effector proteins implicated of host immune defenses, preventing reactive oxygen species generation and excessive callose deposition at plasmodesmata. Furthermore, controls the hyphal constriction required for fungal growth from one rice cell to the neighboring cell, enabling host tissue colonization and blast disease. Targets downstream of the PMK1-MAPK pathway include transcription factor MST12 and pathogenicity-related genes GAS1 and GAS2, both of which are expressed during appressorium formation, even if regulation of MST12 is not associated with expression of GAS1 or GAS2. The sequence is that of Mitogen-activated protein kinase PMK1 from Pyricularia oryzae (Rice blast fungus).